Here is a 219-residue protein sequence, read N- to C-terminus: Ion-translocating oxidoreductase complex subunit G (219 aa).

Residues 25–45 (GLLLGLFSLVSALMLALASDA) form a helical membrane-spanning segment. Threonine 187 bears the FMN phosphoryl threonine mark.

The protein belongs to the RnfG family. In terms of assembly, the complex is composed of six subunits: RnfA, RnfB, RnfC, RnfD, RnfE and RnfG. FMN is required as a cofactor.

The protein resides in the cellular chromatophore membrane. Its function is as follows. Part of a membrane-bound complex that couples electron transfer with translocation of ions across the membrane. This is Ion-translocating oxidoreductase complex subunit G from Cereibacter sphaeroides (strain ATCC 17023 / DSM 158 / JCM 6121 / CCUG 31486 / LMG 2827 / NBRC 12203 / NCIMB 8253 / ATH 2.4.1.) (Rhodobacter sphaeroides).